The following is a 3227-amino-acid chain: E3 ubiquitin-protein ligase ptr1 (3227 aa).

Disordered stretches follow at residues 1806-1836 (SGAA…PPDL), 1869-1894 (MEFE…VMYS), 1908-1929 (QDAS…GDVI), and 2577-2607 (ATTG…KDKK). The segment covering 1811–1823 (DSMGDQSLSSSSE) has biased composition (low complexity). Over residues 1883 to 1894 (VSEDDADDVMYS) the composition is skewed to acidic residues. A compositionally biased stretch (polar residues) spans 2577-2601 (ATTGYTNDQDSRGSTVPKQDPGTTA). The HECT domain occupies 2891 to 3227 (DADEVKFSKL…NEGSEGFGFA (337 aa)). The active-site Glycyl thioester intermediate is the Cys3194.

Belongs to the UPL family. TOM1/PTR1 subfamily.

Its subcellular location is the nucleus. It catalyses the reaction S-ubiquitinyl-[E2 ubiquitin-conjugating enzyme]-L-cysteine + [acceptor protein]-L-lysine = [E2 ubiquitin-conjugating enzyme]-L-cysteine + N(6)-ubiquitinyl-[acceptor protein]-L-lysine.. Its pathway is protein modification; protein ubiquitination. In terms of biological role, probable ubiquitin ligase protein involved in mRNA export. E3 ubiquitin ligase proteins mediate ubiquitination and subsequent proteasomal degradation of target proteins. Probably participates in mRNA export from the nucleus by regulating the transport of hnRNP proteins such as rae1. The sequence is that of E3 ubiquitin-protein ligase ptr1 (ptr1) from Schizosaccharomyces pombe (strain 972 / ATCC 24843) (Fission yeast).